The chain runs to 129 residues: Profilin-4 (129 aa).

The protein belongs to the profilin family. As to expression, expressed in testis, in germ cells in seminiferous tubules (at protein level).

It localises to the cytoplasm. In terms of biological role, involved in male fertility. Required for manchette development and acrosome biogenesis during spermiogenesis. Binds in vitro to phospholipids, including phosphatidylinositol 3-phosphate (PtdIns(3)P), phosphatidylinositol 4,5-bisphosphate (PtdIns(4,5)P2), phosphatidylinositol 4-phosphate (PtdIns(4)P) and phosphatidic acid (PA). Contrary to other profilin family members, does not bind to actin in vitro. The protein is Profilin-4 (Pfn4) of Mus musculus (Mouse).